Reading from the N-terminus, the 640-residue chain is Threonine--tRNA ligase (640 aa).

Positions 224–525 (DHRKLGKELD…LTEHYAGAFP (302 aa)) are catalytic. Zn(2+) contacts are provided by Cys323, His374, and His502.

Belongs to the class-II aminoacyl-tRNA synthetase family. Homodimer. Zn(2+) serves as cofactor.

It is found in the cytoplasm. The catalysed reaction is tRNA(Thr) + L-threonine + ATP = L-threonyl-tRNA(Thr) + AMP + diphosphate + H(+). Functionally, catalyzes the attachment of threonine to tRNA(Thr) in a two-step reaction: L-threonine is first activated by ATP to form Thr-AMP and then transferred to the acceptor end of tRNA(Thr). Also edits incorrectly charged L-seryl-tRNA(Thr). This Tropheryma whipplei (strain TW08/27) (Whipple's bacillus) protein is Threonine--tRNA ligase.